A 160-amino-acid chain; its full sequence is tRNA (cytidine(34)-2'-O)-methyltransferase (160 aa).

S-adenosyl-L-methionine is bound by residues leucine 78, glycine 100, isoleucine 122, and serine 130.

It belongs to the class IV-like SAM-binding methyltransferase superfamily. RNA methyltransferase TrmH family. TrmL subfamily. Homodimer.

The protein localises to the cytoplasm. The enzyme catalyses cytidine(34) in tRNA + S-adenosyl-L-methionine = 2'-O-methylcytidine(34) in tRNA + S-adenosyl-L-homocysteine + H(+). It carries out the reaction 5-carboxymethylaminomethyluridine(34) in tRNA(Leu) + S-adenosyl-L-methionine = 5-carboxymethylaminomethyl-2'-O-methyluridine(34) in tRNA(Leu) + S-adenosyl-L-homocysteine + H(+). Methylates the ribose at the nucleotide 34 wobble position in the two leucyl isoacceptors tRNA(Leu)(CmAA) and tRNA(Leu)(cmnm5UmAA). Catalyzes the methyl transfer from S-adenosyl-L-methionine to the 2'-OH of the wobble nucleotide. The protein is tRNA (cytidine(34)-2'-O)-methyltransferase of Haemophilus influenzae (strain ATCC 51907 / DSM 11121 / KW20 / Rd).